A 441-amino-acid chain; its full sequence is Transforming protein p54/c-ets-1 (441 aa).

The region spanning 51–136 is the PNT domain; sequence ATFSGFAKEQ…EHLEILQKEE (86 aa). The segment at 130 to 243 is activation domain; required for transcription activation; the sequence is EILQKEEAKP…DNMCMGRASR (114 aa). The segment at 304–312 is helix HI-1; it reads FKDYVRDRA. The helix HI-2 stretch occupies residues 323–330; the sequence is AAALAGYT. The segment at residues 335–415 is a DNA-binding region (ETS); it reads IQLWQFLLEL…AGKRYVYRFV (81 aa). Positions 418-422 are helix H4; that stretch reads LQSLL. A helix H5 region spans residues 426–432; sequence PEELHAM.

Belongs to the ETS family. As to quaternary structure, binds DNA as a homodimer; homodimerization is required for transcription activation.

The protein resides in the nucleus. It localises to the cytoplasm. Its activity is regulated as follows. Autoinhibited by a module composed of four alpha helices (HI-1, HI-2, H4, and H5) that flank the DNA-binding ETS domain, reducing the affinity for DNA. Functionally, transcription factor. Directly controls the expression of cytokine and chemokine genes in a wide variety of different cellular contexts. This Gallus gallus (Chicken) protein is Transforming protein p54/c-ets-1 (ETS1).